A 74-amino-acid polypeptide reads, in one-letter code: U3-agatoxin-Ao1b (74 aa).

Residues 1 to 20 (MKAAISLIIFFAILFVVIEA) form the signal peptide. The propeptide occupies 21–34 (ISYEEGKELFQKER). 4 disulfide bridges follow: Cys-37–Cys-53, Cys-44–Cys-58, Cys-52–Cys-68, and Cys-60–Cys-66. At Ser-72 the chain carries Serine amide.

It belongs to the neurotoxin 07 (Beta/delta-agtx) family. 02 (aga-3) subfamily. Expressed by the venom gland.

The protein localises to the secreted. In terms of biological role, insecticidal neurotoxin that induces an irreversible spastic paralysis when injected into insects. Modifies presynaptic voltage-gated sodium channels (Nav), causing them to open at the normal resting potential of the nerve. This leads to spontaneous release of neurotransmitter and repetitive action potentials in motor neurons. In Agelena orientalis (Funnel-web spider), this protein is U3-agatoxin-Ao1b.